A 68-amino-acid polypeptide reads, in one-letter code: Large ribosomal subunit protein bL35 (68 aa).

Belongs to the bacterial ribosomal protein bL35 family.

The protein is Large ribosomal subunit protein bL35 of Fusobacterium nucleatum subsp. nucleatum (strain ATCC 25586 / DSM 15643 / BCRC 10681 / CIP 101130 / JCM 8532 / KCTC 2640 / LMG 13131 / VPI 4355).